The primary structure comprises 126 residues: Late histone H2A.L3 (126 aa).

Positions 1 to 20 (MSGRGKGAGKARAKAKSRSA) are disordered. An N-acetylserine modification is found at S2. S2 carries the phosphoserine modification. Positions 7–19 (GAGKARAKAKSRS) are enriched in basic residues. The residue at position 105 (Q105) is an N5-methylglutamine. Residue K120 forms a Glycyl lysine isopeptide (Lys-Gly) (interchain with G-Cter in ubiquitin) linkage.

It belongs to the histone H2A family. As to quaternary structure, the nucleosome is a histone octamer containing two molecules each of H2A, H2B, H3 and H4 assembled in one H3-H4 heterotetramer and two H2A-H2B heterodimers. The octamer wraps approximately 147 bp of DNA. In terms of processing, monoubiquitination of Lys-120 gives a specific tag for epigenetic transcriptional repression. Phosphorylation of Ser-2 directly represses transcription.

It is found in the nucleus. It localises to the chromosome. In terms of biological role, core component of nucleosome. Nucleosomes wrap and compact DNA into chromatin, limiting DNA accessibility to the cellular machineries which require DNA as a template. Histones thereby play a central role in transcription regulation, DNA repair, DNA replication and chromosomal stability. DNA accessibility is regulated via a complex set of post-translational modifications of histones, also called histone code, and nucleosome remodeling. In Strongylocentrotus purpuratus (Purple sea urchin), this protein is Late histone H2A.L3.